Here is a 923-residue protein sequence, read N- to C-terminus: Protein translocase subunit SecA (923 aa).

Residues Gln86, 104–108, and Asp512 contribute to the ATP site; that span reads GEGKT. Positions 906, 908, 917, and 918 each coordinate Zn(2+).

Belongs to the SecA family. Monomer and homodimer. Part of the essential Sec protein translocation apparatus which comprises SecA, SecYEG and auxiliary proteins SecDF-YajC and YidC. The cofactor is Zn(2+).

The protein localises to the cell inner membrane. It is found in the cytoplasm. It catalyses the reaction ATP + H2O + cellular proteinSide 1 = ADP + phosphate + cellular proteinSide 2.. Part of the Sec protein translocase complex. Interacts with the SecYEG preprotein conducting channel. Has a central role in coupling the hydrolysis of ATP to the transfer of proteins into and across the cell membrane, serving both as a receptor for the preprotein-SecB complex and as an ATP-driven molecular motor driving the stepwise translocation of polypeptide chains across the membrane. The polypeptide is Protein translocase subunit SecA (Caulobacter vibrioides (strain ATCC 19089 / CIP 103742 / CB 15) (Caulobacter crescentus)).